We begin with the raw amino-acid sequence, 110 residues long: Antimicrobial peptide microplusin (110 aa).

A signal peptide spans 1–20 (MKAIFVSALLVVALVASTSA). 3 disulfides stabilise this stretch: C26/C72, C39/C100, and C61/C66.

Expressed in the hemocytes, fat body and ovaries.

It localises to the secreted. Has bacteriostatic activity against the Gram-positive bacterium M.luteus, but not against Gram-negative bacterium E.coli SBS363. Has fungistatic activity against C.neoformans, but not C.albicans. Binds and sequesters copper and iron ions. Copper-chelating is crucial for antimicrobial activity against M.luteus. The protein is Antimicrobial peptide microplusin of Rhipicephalus microplus (Cattle tick).